Consider the following 63-residue polypeptide: Large ribosomal subunit protein uL29 (63 aa).

The protein belongs to the universal ribosomal protein uL29 family.

The polypeptide is Large ribosomal subunit protein uL29 (Haemophilus influenzae (strain 86-028NP)).